The sequence spans 245 residues: Triosephosphate isomerase (245 aa).

Residue 9 to 11 participates in substrate binding; the sequence is NWK. Histidine 92 (electrophile) is an active-site residue. Glutamate 164 acts as the Proton acceptor in catalysis. Substrate is bound by residues glycine 170, serine 209, and 230–231; that span reads GG.

The protein belongs to the triosephosphate isomerase family. Homodimer.

The protein resides in the cytoplasm. It catalyses the reaction D-glyceraldehyde 3-phosphate = dihydroxyacetone phosphate. It functions in the pathway carbohydrate biosynthesis; gluconeogenesis. Its pathway is carbohydrate degradation; glycolysis; D-glyceraldehyde 3-phosphate from glycerone phosphate: step 1/1. In terms of biological role, involved in the gluconeogenesis. Catalyzes stereospecifically the conversion of dihydroxyacetone phosphate (DHAP) to D-glyceraldehyde-3-phosphate (G3P). This is Triosephosphate isomerase from Cupriavidus necator (strain ATCC 17699 / DSM 428 / KCTC 22496 / NCIMB 10442 / H16 / Stanier 337) (Ralstonia eutropha).